A 1832-amino-acid polypeptide reads, in one-letter code: Putative transcription factor capicua (1832 aa).

Ser-41 and Ser-49 each carry phosphoserine. 15 disordered regions span residues 66–121 (ANQS…EVGS), 135–227 (STVG…AHPH), 323–353 (QQQQ…NHNN), 389–427 (NQRQ…AAMR), 444–493 (DGAA…IRRP), 563–619 (DRRK…GGQG), 690–739 (RERV…SGGE), 784–845 (QPTG…VSAP), 874–938 (PMHH…EDDE), 1069–1105 (TSTL…TISC), 1151–1178 (GQDE…EQVT), 1457–1602 (DGGM…STAA), 1632–1668 (QPED…VQKL), 1701–1733 (LESS…HRKV), and 1789–1817 (ASCT…SSTS). The segment covering 96-121 (NANNNSSNNNTSSSNNNNNSNWEVGS) has biased composition (low complexity). Residues 172–186 (PPPPPPASLPAPSAP) show a composition bias toward pro residues. 3 stretches are compositionally biased toward low complexity: residues 187–203 (PTSG…HATS), 211–223 (QQQH…HQQQ), and 323–342 (QQQQ…QQQQ). The span at 397-408 (EEPDDQLDDDVF) shows a compositional bias: acidic residues. Positions 409-422 (ETTTPGISANSKKQ) are enriched in polar residues. Positions 446 to 484 (AAGAPATSAAKRRSQSLSALQQQQQQQQQAGAAGTAAGQ) are enriched in low complexity. The HMG box DNA-binding region spans 490-558 (IRRPMNAFMI…AHFKLHPEWK (69 aa)). The segment covering 610-619 (GGSGSCGGQG) has biased composition (gly residues). The tract at residues 834 to 1832 (GSASGGGVVS…TSAADVFQYY (999 aa)) is interaction with gro. Over residues 903–914 (ESSEKDKPALDD) the composition is skewed to basic and acidic residues. Acidic residues predominate over residues 915 to 938 (QERDEVEEEDEDEEDDDEDDEDDE). The span at 1078-1091 (NPANNEAPNKFSNF) shows a compositional bias: polar residues. Positions 1092-1105 (PTQHQPTTTTTISC) are enriched in low complexity. A compositionally biased stretch (low complexity) spans 1462–1471 (GCASAAASGG). Residues 1503-1525 (LSQSKSESNVSFGANLGASNGQH) show a composition bias toward polar residues. Over residues 1547 to 1589 (NSSNLSSALPTPTSSTTTPNSDEQLPLTPTTSSSNSNLNQQQP) the composition is skewed to low complexity. Thr-1716 bears the Phosphothreonine mark. Positions 1724-1733 (DASEKGHRKV) are enriched in basic and acidic residues. Polar residues predominate over residues 1789–1799 (ASCTPHSAGPN). Residues 1800-1817 (TPSDSNSSSTTLSASSTS) show a composition bias toward low complexity.

Interacts with gro. As to expression, expressed in the central region of embryos. Also expressed in ovarian follicle cells, the wing imaginal disks and the wing pouch.

It localises to the nucleus. In terms of biological role, transcriptional repressor required for the specification of numerous cell types during embryonic development. Required for terminal patterning of early embryos. May associate with gro to repress tll and hkb, restricting their expression to embryonic terminal poles where they initiate correct development of head and tail structures. Required for dorsoventral patterning of oocytes and early embryos. Cooperates with dl to repress zen and other dorsal specific genes within the embryo and promotes expression of the ventralizing factor pip in ovarian follicle cells. Required during wing development for the specification of intervein areas, where it mediates localized repression of vein specific genes such as aos, dpp and vvl. This is Putative transcription factor capicua (cic) from Drosophila melanogaster (Fruit fly).